The sequence spans 230 residues: NADH dehydrogenase [ubiquinone] iron-sulfur protein 8, mitochondrial (230 aa).

The N-terminal 42 residues, 1–42 (MAAILARKSLSALRSRQLVLAGQAWQQGANTSNGTLLGTRTF), are a transit peptide targeting the mitochondrion. 4Fe-4S ferredoxin-type domains follow at residues 122 to 151 (RRYP…IEAE) and 161 to 190 (TRYD…EGPN). Residues Cys-131, Cys-134, Cys-137, Cys-141, Cys-170, Cys-173, Cys-176, and Cys-180 each coordinate [4Fe-4S] cluster.

The protein belongs to the complex I 23 kDa subunit family. Complex I is composed of about 45 different subunits. This is a component of the iron-sulfur (IP) fragment of the enzyme. It depends on [4Fe-4S] cluster as a cofactor.

The protein localises to the mitochondrion. It catalyses the reaction a ubiquinone + NADH + 5 H(+)(in) = a ubiquinol + NAD(+) + 4 H(+)(out). Functionally, core subunit of the mitochondrial membrane respiratory chain NADH dehydrogenase (Complex I) that is believed to belong to the minimal assembly required for catalysis. Complex I functions in the transfer of electrons from NADH to the respiratory chain. The immediate electron acceptor for the enzyme is believed to be ubiquinone. May donate electrons to ubiquinone. The polypeptide is NADH dehydrogenase [ubiquinone] iron-sulfur protein 8, mitochondrial (Nicotiana tabacum (Common tobacco)).